Reading from the N-terminus, the 309-residue chain is MPIRVLDELPAVNFLREENVFVMTTSRASGQEIRPLKVLILNLMPKKIETENQFLRLLSNSPLQVDIQLLRIDARESRNTPAEHLNNFYCNFDDICDQNFDGLIVTGAPLGLVEFNDVAYWPQIRQVLEWAKDHVTSTLFVCWAVQAALNILYGIPKQTRTDKLSGVYEHHILHPHALLTRGFDDSFLAPHSRYADFPAALIRDYTDLEILAETEEGDAYLFASKDKRIAFVTGHPEYDAHTLAGEYFRDVEAGLNPEVPYNYFPKNDPQNIPRATWRSHGNLLFTNWLNYYVYQITPYDLRHMNPTLD.

Catalysis depends on C142, which acts as the Acyl-thioester intermediate. Substrate-binding residues include K163 and S192. H235 (proton acceptor) is an active-site residue. The active site involves E237. R249 serves as a coordination point for substrate.

Belongs to the MetA family. In terms of assembly, homodimer.

It is found in the cytoplasm. It carries out the reaction L-homoserine + succinyl-CoA = O-succinyl-L-homoserine + CoA. It participates in amino-acid biosynthesis; L-methionine biosynthesis via de novo pathway; O-succinyl-L-homoserine from L-homoserine: step 1/1. Its function is as follows. Transfers a succinyl group from succinyl-CoA to L-homoserine, forming succinyl-L-homoserine. This Salmonella choleraesuis (strain SC-B67) protein is Homoserine O-succinyltransferase.